Consider the following 510-residue polypeptide: NAD(P)H-quinone oxidoreductase subunit 2 A, chloroplastic (510 aa).

Transmembrane regions (helical) follow at residues 24-44, 59-79, 99-119, 124-144, 149-169, 183-203, 229-249, 295-315, 323-343, 354-374, 395-415, and 418-438; these read LLLF…GLIL, WFYF…LFRW, IFQF…VEYI, MAIT…MFLC, LITI…LSGY, YLLM…WLYG, ISLA…PAPF, WHLL…LLAI, MLAY…IVGD, YMLF…LFGL, ALSL…AGFF, and LYLF…IGLL.

The protein belongs to the complex I subunit 2 family. In terms of assembly, NDH is composed of at least 16 different subunits, 5 of which are encoded in the nucleus.

It localises to the plastid. The protein resides in the chloroplast thylakoid membrane. It catalyses the reaction a plastoquinone + NADH + (n+1) H(+)(in) = a plastoquinol + NAD(+) + n H(+)(out). It carries out the reaction a plastoquinone + NADPH + (n+1) H(+)(in) = a plastoquinol + NADP(+) + n H(+)(out). NDH shuttles electrons from NAD(P)H:plastoquinone, via FMN and iron-sulfur (Fe-S) centers, to quinones in the photosynthetic chain and possibly in a chloroplast respiratory chain. The immediate electron acceptor for the enzyme in this species is believed to be plastoquinone. Couples the redox reaction to proton translocation, and thus conserves the redox energy in a proton gradient. This Triticum aestivum (Wheat) protein is NAD(P)H-quinone oxidoreductase subunit 2 A, chloroplastic.